The sequence spans 115 residues: NADH-ubiquinone oxidoreductase chain 3 (115 aa).

The next 3 helical transmembrane spans lie at 3-23, 55-75, and 87-107; these read LMLTLFTNATLASLLILIAFW, FFLVAITFLLFDLEIALLLPL, and VLFMALALITLLALSLAYEWI.

This sequence belongs to the complex I subunit 3 family. Core subunit of respiratory chain NADH dehydrogenase (Complex I) which is composed of 45 different subunits. Interacts with TMEM186. Interacts with TMEM242.

The protein resides in the mitochondrion inner membrane. It carries out the reaction a ubiquinone + NADH + 5 H(+)(in) = a ubiquinol + NAD(+) + 4 H(+)(out). Its function is as follows. Core subunit of the mitochondrial membrane respiratory chain NADH dehydrogenase (Complex I) which catalyzes electron transfer from NADH through the respiratory chain, using ubiquinone as an electron acceptor. Essential for the catalytic activity of complex I. This Dugong dugon (Dugong) protein is NADH-ubiquinone oxidoreductase chain 3.